Here is a 206-residue protein sequence, read N- to C-terminus: Large ribosomal subunit protein uL4 (206 aa).

A disordered region spans residues 43–78 (ARSGNRKQKDREEVKHTTKKPWRQKGTGRARAGMSS). Residues 49 to 58 (KQKDREEVKH) show a composition bias toward basic and acidic residues. Positions 59-70 (TTKKPWRQKGTG) are enriched in basic residues.

The protein belongs to the universal ribosomal protein uL4 family. Part of the 50S ribosomal subunit.

In terms of biological role, one of the primary rRNA binding proteins, this protein initially binds near the 5'-end of the 23S rRNA. It is important during the early stages of 50S assembly. It makes multiple contacts with different domains of the 23S rRNA in the assembled 50S subunit and ribosome. Functionally, forms part of the polypeptide exit tunnel. The chain is Large ribosomal subunit protein uL4 from Ralstonia pickettii (strain 12J).